The sequence spans 445 residues: MKPVIALVGRPNVGKSTLFNRLTRSRDALVADLPGLTRDRHYGEGRTGERPYLVVDTGGFEPVAKDGILHEMARQTRQAVEESDIVVFIVDGRNGLAPQDKSIADYLRKVGRPIFLVVNKAEGMKYSTVAADFYELGLGDPRAISAAHGDGVTEMINEALEVAYAGQPEENDDEKAARGVKIAIVGRPNVGKSTLINALVGEERVIAFDMPGTTRDSIYVDFERGGKPYTLIDTAGLRRRGKVFEAIEKFSVVKTLQSISDANVVILLLDARQDISEQDAHIAGFVVEQGRALVVGVNKWDGLDPHVRERTKADLERKLKFLDFAKFHFISAAEKTGIGPLMRSVDDAYAAAMAKLPTPKLTRALIDAVEFQQPRRRGPVRPKLRYAHQGGQNPPIIVIHGNALDAITETYKRYLENRFRETFKLTGTPLRIEFRSSTNPYADKA.

EngA-type G domains are found at residues Pro3 to Gln167 and Val180 to Met353. GTP contacts are provided by residues Gly9–Ser16, Asp56–Phe60, Asn119–Glu122, Gly186–Ser193, Asp233–Leu237, and Asn298–Asp301. The KH-like domain occupies Ala354–Thr438.

Belongs to the TRAFAC class TrmE-Era-EngA-EngB-Septin-like GTPase superfamily. EngA (Der) GTPase family. As to quaternary structure, associates with the 50S ribosomal subunit.

GTPase that plays an essential role in the late steps of ribosome biogenesis. The protein is GTPase Der of Paraburkholderia xenovorans (strain LB400).